Consider the following 407-residue polypeptide: SERPINE1 mRNA-binding protein 1 (407 aa).

Position 25 is a phosphoserine (S25). A disordered region spans residues 33–227; it reads AAENKKKEAG…GSGSHNWGTV (195 aa). Low complexity predominate over residues 51 to 68; it reads AKSAAQAAAQTNSNAAGK. The residue at position 52 (K52) is an N6-acetyllysine; alternate. K52 is covalently cross-linked (Glycyl lysine isopeptide (Lys-Gly) (interchain with G-Cter in SUMO1); alternate). K68 carries the N6-acetyllysine modification. Basic and acidic residues-rich tracts occupy residues 70–80, 89–114, and 122–162; these read LRKESQKDRKN, VDKKEETQPPVALKKEGIRRVGRRPD, and KIID…DRPI. K102 participates in a covalent cross-link: Glycyl lysine isopeptide (Lys-Gly) (interchain with G-Cter in SUMO1); alternate. Residue K102 forms a Glycyl lysine isopeptide (Lys-Gly) (interchain with G-Cter in SUMO2) linkage. K102 participates in a covalent cross-link: Glycyl lysine isopeptide (Lys-Gly) (interchain with G-Cter in SUMO2); alternate. An N6-acetyllysine mark is found at K122 and K140. A compositionally biased stretch (gly residues) spans 164-182; the sequence is GRGGLGRGRGGRGRGMGRG. R165 and R188 each carry omega-N-methylarginine. Over residues 183–199 the composition is skewed to basic and acidic residues; the sequence is DGFDSRGKREFDRHSGS. Phosphoserine occurs at positions 197, 199, 203, 205, and 208. N6-acetyllysine; alternate is present on K211. A Glycyl lysine isopeptide (Lys-Gly) (interchain with G-Cter in SUMO2); alternate cross-link involves residue K211. R216 carries the post-translational modification Omega-N-methylarginine. S221 bears the Phosphoserine mark. Residue T226 is modified to Phosphothreonine. K228 is covalently cross-linked (Glycyl lysine isopeptide (Lys-Gly) (interchain with G-Cter in SUMO1); alternate). K228 is covalently cross-linked (Glycyl lysine isopeptide (Lys-Gly) (interchain with G-Cter in SUMO2); alternate). S234 carries the post-translational modification Phosphoserine. Positions 242–256 are enriched in polar residues; the sequence is ISYNCSDLDQSNVTE. Disordered regions lie at residues 242-291 and 327-407; these read ISYN…TLDE and SKSE…PALA. A compositionally biased stretch (basic and acidic residues) spans 261-274; sequence GEEHPVADTENKEN. A Glycyl lysine isopeptide (Lys-Gly) (interchain with G-Cter in SUMO1); alternate cross-link involves residue K280. A Glycyl lysine isopeptide (Lys-Gly) (interchain with G-Cter in SUMO2) cross-link involves residue K280. Residue K280 forms a Glycyl lysine isopeptide (Lys-Gly) (interchain with G-Cter in SUMO2); alternate linkage. Composition is skewed to basic and acidic residues over residues 281–291 and 327–341; these read EEGPKEMTLDE and SKSEEAHAEDSVMDH. K328 carries the post-translational modification N6-acetyllysine. At S329 the chain carries Phosphoserine. Gly residues predominate over residues 362–371; the sequence is GRPGRGGRGG. 3 positions are modified to omega-N-methylarginine: R363, R366, and R369. Residues S391 and S393 each carry the phosphoserine modification.

The protein belongs to the SERBP1-HABP4 family. In terms of assembly, associates with mature 80S ribosomes. Interacts with EEF2/eEF2; interaction sequesters EEF2/eEF2 at the A-site of the ribosome, thereby blocking the interaction sites of the mRNA-tRNA complex, promoting ribosome stabilization and hibernation. Interacts with SPIN1. Interacts with CHD3 and TDRD3. Interacts with ZDHHC17 (via ANK repeats). In terms of processing, phosphorylation by MTOR inhibits SERBP1 and relieves ribosome hibernation.

Its function is as follows. Ribosome-binding protein that promotes ribosome hibernation, a process during which ribosomes are stabilized in an inactive state and preserved from proteasomal degradation. Acts via its association with EEF2/eEF2 factor, sequestering EEF2/eEF2 at the A-site of the ribosome and promoting ribosome stabilization and storage in an inactive state. May also play a role in the regulation of mRNA stability: binds to the 3'-most 134 nt of the SERPINE1/PAI1 mRNA, a region which confers cyclic nucleotide regulation of message decay. Seems to play a role in PML-nuclear bodies formation. This is SERPINE1 mRNA-binding protein 1 from Oryctolagus cuniculus (Rabbit).